The following is a 195-amino-acid chain: Lipid A acyltransferase PagP (195 aa).

Residues 1–30 (MRLTLTSRSRLFVLSSLLFISTFDVLSAQA) form the signal peptide. Residues His67, Asp110, and Ser111 contribute to the active site.

It belongs to the lipid A palmitoyltransferase family. As to quaternary structure, homodimer.

The protein localises to the cell outer membrane. It carries out the reaction a lipid A + a 1,2-diacyl-sn-glycero-3-phosphocholine = a hepta-acyl lipid A + a 2-acyl-sn-glycero-3-phosphocholine. It catalyses the reaction a lipid IVA + a 1,2-diacyl-sn-glycero-3-phosphocholine = a lipid IVB + a 2-acyl-sn-glycero-3-phosphocholine. The enzyme catalyses a lipid IIA + a 1,2-diacyl-sn-glycero-3-phosphocholine = a lipid IIB + a 2-acyl-sn-glycero-3-phosphocholine. Functionally, transfers a fatty acid residue from the sn-1 position of a phospholipid to the N-linked hydroxyfatty acid chain on the proximal unit of lipid A or its precursors. This Dickeya chrysanthemi (strain Ech1591) (Dickeya zeae (strain Ech1591)) protein is Lipid A acyltransferase PagP.